The chain runs to 564 residues: Plant UBX domain-containing protein 8 (564 aa).

N-acetylalanine is present on alanine 2. In terms of domain architecture, UBA-like spans alanine 2–glutamate 44. UIM domains lie at isoleucine 198 to serine 217 and glutamate 230 to glutamate 249. Residues serine 210–methionine 229 are disordered. Disordered regions lie at residues alanine 267 to aspartate 358, isoleucine 371 to methionine 423, and phenylalanine 443 to glutamate 483. Residues phenylalanine 291 to glutamate 300 show a composition bias toward acidic residues. Phosphoserine is present on residues serine 295, serine 324, serine 326, and serine 328. Positions aspartate 322–alanine 334 are enriched in basic and acidic residues. Over residues phenylalanine 381–proline 395 the composition is skewed to pro residues. The stretch at valine 412–glutamate 478 forms a coiled coil. Basic and acidic residues predominate over residues phenylalanine 443–leucine 475. Positions aspartate 482 to phenylalanine 560 constitute a UBX domain.

Interacts with RABA5C/ARA-4.

This Arabidopsis thaliana (Mouse-ear cress) protein is Plant UBX domain-containing protein 8.